Consider the following 511-residue polypeptide: Bifunctional purine biosynthesis protein PurH (511 aa).

One can recognise an MGS-like domain in the interval 1–147 (MIQIKRALIS…KNYKHTLVLT (147 aa)).

This sequence belongs to the PurH family.

It catalyses the reaction (6R)-10-formyltetrahydrofolate + 5-amino-1-(5-phospho-beta-D-ribosyl)imidazole-4-carboxamide = 5-formamido-1-(5-phospho-D-ribosyl)imidazole-4-carboxamide + (6S)-5,6,7,8-tetrahydrofolate. The enzyme catalyses IMP + H2O = 5-formamido-1-(5-phospho-D-ribosyl)imidazole-4-carboxamide. The protein operates within purine metabolism; IMP biosynthesis via de novo pathway; 5-formamido-1-(5-phospho-D-ribosyl)imidazole-4-carboxamide from 5-amino-1-(5-phospho-D-ribosyl)imidazole-4-carboxamide (10-formyl THF route): step 1/1. Its pathway is purine metabolism; IMP biosynthesis via de novo pathway; IMP from 5-formamido-1-(5-phospho-D-ribosyl)imidazole-4-carboxamide: step 1/1. The polypeptide is Bifunctional purine biosynthesis protein PurH (Leptospira interrogans serogroup Icterohaemorrhagiae serovar Lai (strain 56601)).